Consider the following 82-residue polypeptide: ATP synthase subunit c, chloroplastic (82 aa).

A run of 2 helical transmembrane segments spans residues 3-23 (PLIA…ASIG) and 57-77 (LAFM…LLFA).

The protein belongs to the ATPase C chain family. As to quaternary structure, F-type ATPases have 2 components, F(1) - the catalytic core - and F(0) - the membrane proton channel. F(1) has five subunits: alpha(3), beta(3), gamma(1), delta(1), epsilon(1). F(0) has four main subunits: a(1), b(1), b'(1) and c(10-14). The alpha and beta chains form an alternating ring which encloses part of the gamma chain. F(1) is attached to F(0) by a central stalk formed by the gamma and epsilon chains, while a peripheral stalk is formed by the delta, b and b' chains.

It is found in the plastid. Its subcellular location is the chloroplast thylakoid membrane. Functionally, f(1)F(0) ATP synthase produces ATP from ADP in the presence of a proton or sodium gradient. F-type ATPases consist of two structural domains, F(1) containing the extramembraneous catalytic core and F(0) containing the membrane proton channel, linked together by a central stalk and a peripheral stalk. During catalysis, ATP synthesis in the catalytic domain of F(1) is coupled via a rotary mechanism of the central stalk subunits to proton translocation. Key component of the F(0) channel; it plays a direct role in translocation across the membrane. A homomeric c-ring of between 10-14 subunits forms the central stalk rotor element with the F(1) delta and epsilon subunits. The sequence is that of ATP synthase subunit c, chloroplastic from Nephroselmis olivacea (Green alga).